The primary structure comprises 375 residues: Growth/differentiation factor 8 (375 aa).

An N-terminal signal peptide occupies residues 1-23 (MQKLQLCVYIYLFMLIVAGPVDL). The propeptide occupies 24-266 (NENSEQKENV…VTDTPKRSRR (243 aa)). A glycan (N-linked (GlcNAc...) asparagine) is linked at Asn-71. Disulfide bonds link Cys-272–Cys-282, Cys-281–Cys-340, Cys-309–Cys-372, and Cys-313–Cys-374.

Belongs to the TGF-beta family. In terms of assembly, homodimer; disulfide-linked. Interacts with WFIKKN2, leading to inhibit its activity. Interacts with FST3. In terms of processing, synthesized as large precursor molecule that undergoes proteolytic cleavage to generate an N-terminal propeptide and a disulfide linked C-terminal dimer, which is the biologically active molecule. The circulating form consists of a latent complex of the C-terminal dimer and other proteins, including its propeptide, which maintain the C-terminal dimer in a latent, inactive state. Ligand activation requires additional cleavage of the prodomain by a tolloid-like metalloproteinase.

It is found in the secreted. Acts specifically as a negative regulator of skeletal muscle growth. This is Growth/differentiation factor 8 (MSTN) from Homo sapiens (Human).